Reading from the N-terminus, the 424-residue chain is MGSLVLTLCALFCLAAYLVSGSPIMNLEQSPLEEDMSLFGDVFSEQDGVDFNTLLQSMKDEFLKTLNLSDIPTQDSAKVDPPEYMLELYNKFATDRTSMPSANIIRSFKNEDLFSQPVSFNGLRKYPLLFNVSIPHHEEVIMAELRLYTLVQRDRMIYDGVDRKITIFEVLESKGDNEGERNMLVLVSGEIYGTNSEWETFDVTDAIRRWQKSGSSTHQLEVHIESKHDEAEDASSGRLEIDTSAQNKHNPLLIVFSDDQSSDKERKEELNEMISHEQLPELDNLGLDSFSSGPGEEALLQMRSNIIYDSTARIRRNAKGNYCKRTPLYIDFKEIGWDSWIIAPPGYEAYECRGVCNYPLAEHLTPTKHAIIQALVHLKNSQKASKACCVPTKLEPISILYLDKGVVTYKFKYEGMAVSECGCR.

The first 21 residues, Met-1–Gly-21, serve as a signal peptide directing secretion. Residues Ser-22–Arg-316 constitute a propeptide that is removed on maturation. N-linked (GlcNAc...) asparagine glycans are attached at residues Asn-67 and Asn-131. Cystine bridges form between Cys-323/Cys-389, Cys-352/Cys-421, and Cys-356/Cys-423.

Belongs to the TGF-beta family. Homodimer; disulfide-linked. Interacts with FBN1 (via N-terminal domain) and FBN2. Interacts with ENG. In terms of tissue distribution, detected in mammary epithelia (at protein level).

It localises to the secreted. Its function is as follows. Required for maintaining the proliferative activity of embryonic cardiomyocytes by preventing premature activation of the negative cell cycle regulator CDKN1C/p57KIP and maintaining the required expression levels of cardiogenic factors such as MEF2C and NKX2-5. Acts as a ligand for ACVRL1/ALK1, BMPR1A/ALK3 and BMPR1B/ALK6, leading to activation of SMAD1, SMAD5 and SMAD8 transcription factors. Inhibits endothelial cell migration and growth. May reduce cell migration and cell matrix adhesion in breast cancer cell lines. In Homo sapiens (Human), this protein is Bone morphogenetic protein 10 (BMP10).